The primary structure comprises 373 residues: P2Y purinoceptor 2 (373 aa).

The Extracellular portion of the chain corresponds to 1–32 (MAADLEPWNSTINGTWEGDELGYKCRFNEDFK). N-linked (GlcNAc...) asparagine glycosylation is found at N9 and N13. Residues 33 to 59 (YVLLPVSYGVVCVLGLCLNVVALYIFL) form a helical membrane-spanning segment. The Cytoplasmic segment spans residues 60–70 (CRLKTWNASTT). Residues 71-93 (YMFHLAVSDSLYAASLPLLVYYY) form a helical membrane-spanning segment. The Extracellular segment spans residues 94 to 110 (ARGDHWPFSTVLCKLVR). An intrachain disulfide couples C106 to C183. The chain crosses the membrane as a helical span at residues 111 to 129 (FLFYTNLYCSILFLTCISV). Over 130-152 (HRCLGVLRPLHSLRWGRARYARR) the chain is Cytoplasmic. Residues 153–172 (VAAVVWVLVLACQAPVLYFV) form a helical membrane-spanning segment. The Extracellular segment spans residues 173–194 (TTSVRGTRITCHDTSARELFSH). The helical transmembrane segment at 195 to 220 (FVAYSSVMLGLLFAVPFSVILVCYVL) threads the bilayer. At 221–246 (MARRLLKPAYGTTGGLPRAKRKSVRT) the chain is on the cytoplasmic side. Residues 247-269 (IALVLAVFALCFLPFHVTRTLYY) form a helical membrane-spanning segment. Topologically, residues 270–287 (SFRSLDLSCHTLNAINMA) are extracellular. The chain crosses the membrane as a helical span at residues 288–309 (YKITRPLASANSCLDPVLYFLA). The Cytoplasmic segment spans residues 310-373 (GQRLVRFARD…AGSETKDIRL (64 aa)). The disordered stretch occupies residues 318–373 (RDAKPPTEPTPSPQARRKLGLHRPNRTVRKDLSVSSDDSRRTESTPAGSETKDIRL). Over residues 332-344 (ARRKLGLHRPNRT) the composition is skewed to basic residues. Positions 345 to 360 (VRKDLSVSSDDSRRTE) are enriched in basic and acidic residues.

This sequence belongs to the G-protein coupled receptor 1 family. As to expression, spleen, testis, kidney, liver, lung, heart and brain.

Its subcellular location is the cell membrane. Receptor for ATP and UTP coupled to G-proteins that activate a phosphatidylinositol-calcium second messenger system. The affinity range is UTP = ATP &gt; ATP-gamma-S &gt;&gt; 2-methylthio-ATP = ADP. The chain is P2Y purinoceptor 2 (P2ry2) from Mus musculus (Mouse).